Consider the following 364-residue polypeptide: Dihydroorotate dehydrogenase (quinone) (364 aa).

FMN is bound by residues 61–65 (AGFDK) and T85. K65 is a substrate binding site. A substrate-binding site is contributed by 110 to 114 (NRMGF). Residues N139 and N170 each contribute to the FMN site. N170 contributes to the substrate binding site. S173 serves as the catalytic Nucleophile. Position 175 (N175) interacts with substrate. K214 and A242 together coordinate FMN. 243–244 (NT) contributes to the substrate binding site. FMN is bound by residues G266, G295, and 316 to 317 (YS).

The protein belongs to the dihydroorotate dehydrogenase family. Type 2 subfamily. In terms of assembly, monomer. It depends on FMN as a cofactor.

The protein localises to the cell membrane. The enzyme catalyses (S)-dihydroorotate + a quinone = orotate + a quinol. It functions in the pathway pyrimidine metabolism; UMP biosynthesis via de novo pathway; orotate from (S)-dihydroorotate (quinone route): step 1/1. In terms of biological role, catalyzes the conversion of dihydroorotate to orotate with quinone as electron acceptor. This Rhodopseudomonas palustris (strain ATCC BAA-98 / CGA009) protein is Dihydroorotate dehydrogenase (quinone).